The chain runs to 230 residues: Cell division ATP-binding protein FtsE (230 aa).

The 226-residue stretch at 3–228 (ITLDHVTKQY…RDEQRGVYGM (226 aa)) folds into the ABC transporter domain. 37–44 (GPSGSGKS) contacts ATP.

It belongs to the ABC transporter superfamily. Homodimer. Forms a membrane-associated complex with FtsX.

Its subcellular location is the cell membrane. In terms of biological role, part of the ABC transporter FtsEX involved in cellular division. Has ATPase activity. The sequence is that of Cell division ATP-binding protein FtsE from Mycobacterium tuberculosis (strain ATCC 25618 / H37Rv).